The sequence spans 215 residues: Orotate phosphoribosyltransferase (215 aa).

5-phospho-alpha-D-ribose 1-diphosphate is bound at residue lysine 25. Orotate is bound at residue 33 to 34; sequence FF. 5-phospho-alpha-D-ribose 1-diphosphate contacts are provided by residues 71 to 72, arginine 98, lysine 99, lysine 102, histidine 104, and 124 to 132; these read YK and DDVITAGTA. Orotate contacts are provided by threonine 128 and arginine 156.

It belongs to the purine/pyrimidine phosphoribosyltransferase family. PyrE subfamily. Homodimer.

It carries out the reaction orotidine 5'-phosphate + diphosphate = orotate + 5-phospho-alpha-D-ribose 1-diphosphate. Its pathway is pyrimidine metabolism; UMP biosynthesis via de novo pathway; UMP from orotate: step 1/2. In terms of biological role, catalyzes the transfer of a ribosyl phosphate group from 5-phosphoribose 1-diphosphate to orotate, leading to the formation of orotidine monophosphate (OMP). The sequence is that of Orotate phosphoribosyltransferase (ura5) from Schizosaccharomyces pombe (strain 972 / ATCC 24843) (Fission yeast).